A 542-amino-acid chain; its full sequence is CTP synthase (542 aa).

An amidoligase domain region spans residues 1–266 (MATNYIFVTG…DDFICQRFHL (266 aa)). Residue S14 coordinates CTP. S14 contacts UTP. Residues 15 to 20 (SLGKGI) and D72 each bind ATP. 2 residues coordinate Mg(2+): D72 and E140. CTP contacts are provided by residues 147-149 (DIE), 187-192 (KTKPTQ), and K223. UTP contacts are provided by residues 187–192 (KTKPTQ) and K223. 239–241 (KDV) contacts ATP. The 252-residue stretch at 291–542 (VIGMVGKYTE…VKAAKDNQKK (252 aa)) folds into the Glutamine amidotransferase type-1 domain. G352 contacts L-glutamine. C379 acts as the Nucleophile; for glutamine hydrolysis in catalysis. Residues 380 to 383 (LGMQ), E403, and R470 each bind L-glutamine. Active-site residues include H515 and E517.

Belongs to the CTP synthase family. As to quaternary structure, homotetramer.

The enzyme catalyses UTP + L-glutamine + ATP + H2O = CTP + L-glutamate + ADP + phosphate + 2 H(+). It carries out the reaction L-glutamine + H2O = L-glutamate + NH4(+). It catalyses the reaction UTP + NH4(+) + ATP = CTP + ADP + phosphate + 2 H(+). The protein operates within pyrimidine metabolism; CTP biosynthesis via de novo pathway; CTP from UDP: step 2/2. Allosterically activated by GTP, when glutamine is the substrate; GTP has no effect on the reaction when ammonia is the substrate. The allosteric effector GTP functions by stabilizing the protein conformation that binds the tetrahedral intermediate(s) formed during glutamine hydrolysis. Inhibited by the product CTP, via allosteric rather than competitive inhibition. Its function is as follows. Catalyzes the ATP-dependent amination of UTP to CTP with either L-glutamine or ammonia as the source of nitrogen. Regulates intracellular CTP levels through interactions with the four ribonucleotide triphosphates. This Pasteurella multocida (strain Pm70) protein is CTP synthase.